Consider the following 142-residue polypeptide: Large-conductance mechanosensitive channel (142 aa).

Helical transmembrane passes span 10–30 (FAVKGNVVDLAVGVIIGGAFG), 40–60 (LIMPVVGLVFGKLDFSNLFVV), and 86–106 (GNFITVAVNFIILAFIIFMMV).

This sequence belongs to the MscL family. Homopentamer.

It localises to the cell inner membrane. Channel that opens in response to stretch forces in the membrane lipid bilayer. May participate in the regulation of osmotic pressure changes within the cell. This chain is Large-conductance mechanosensitive channel, found in Delftia acidovorans (strain DSM 14801 / SPH-1).